A 312-amino-acid polypeptide reads, in one-letter code: Glycerol-3-phosphate dehydrogenase [NAD(P)+] (312 aa).

Positions 11, 30, 31, and 95 each coordinate NADPH. Sn-glycerol 3-phosphate contacts are provided by Lys-95, Gly-123, and Ser-125. Position 127 (Ala-127) interacts with NADPH. Positions 177, 230, 240, 241, and 242 each coordinate sn-glycerol 3-phosphate. Lys-177 serves as the catalytic Proton acceptor. Residue Arg-241 participates in NADPH binding. Positions 265 and 267 each coordinate NADPH.

The protein belongs to the NAD-dependent glycerol-3-phosphate dehydrogenase family.

Its subcellular location is the cytoplasm. It carries out the reaction sn-glycerol 3-phosphate + NAD(+) = dihydroxyacetone phosphate + NADH + H(+). It catalyses the reaction sn-glycerol 3-phosphate + NADP(+) = dihydroxyacetone phosphate + NADPH + H(+). It participates in membrane lipid metabolism; glycerophospholipid metabolism. In terms of biological role, catalyzes the reduction of the glycolytic intermediate dihydroxyacetone phosphate (DHAP) to sn-glycerol 3-phosphate (G3P), the key precursor for phospholipid synthesis. The polypeptide is Glycerol-3-phosphate dehydrogenase [NAD(P)+] (Helicobacter acinonychis (strain Sheeba)).